Here is a 227-residue protein sequence, read N- to C-terminus: Ferritin light chain (227 aa).

Residues 1–19 (MKFFVALALFACLGSLALA) form the signal peptide. Cys-25 and Cys-44 are disulfide-bonded. A Ferritin-like diiron domain is found at 48-208 (FAGIDHIEPE…GYANDLAKLM (161 aa)).

This sequence belongs to the ferritin family. Oligomer of 12 light (L) chains and 12 heavy (H) chains; L and H chains are disulfide-linked. The functional molecule forms a roughly spherical shell with a diameter of 12 nm and contains a central cavity into which the insoluble ferric iron core is deposited. As to expression, expressed in hemolymph, gut, ovaries and to a lesser extent in testes (at protein level). Expressed in the head (at protein level).

It localises to the golgi apparatus. It is found in the secreted. Its function is as follows. Stores iron in a soluble, non-toxic, readily available form. Important for iron homeostasis. Iron is taken up in the ferrous form and deposited as ferric hydroxides after oxidation. Ferritin is composed of a heavy (H) chain which is responsible for the oxidation and uptake of ferrous iron, and a light (L) chain which facilitates the nucleation of the ferrihydrite iron core. Required for dietary iron absorption in the midgut. Involved in tissue iron detoxification by exporting excess iron. Plays a role in the maintenance of circadian rhythms. Required for embryo and larval development. This chain is Ferritin light chain, found in Drosophila melanogaster (Fruit fly).